We begin with the raw amino-acid sequence, 100 residues long: Urease subunit gamma (100 aa).

Belongs to the urease gamma subunit family. In terms of assembly, heterotrimer of UreA (gamma), UreB (beta) and UreC (alpha) subunits. Three heterotrimers associate to form the active enzyme.

The protein localises to the cytoplasm. The catalysed reaction is urea + 2 H2O + H(+) = hydrogencarbonate + 2 NH4(+). The protein operates within nitrogen metabolism; urea degradation; CO(2) and NH(3) from urea (urease route): step 1/1. The protein is Urease subunit gamma of Flavobacterium johnsoniae (strain ATCC 17061 / DSM 2064 / JCM 8514 / BCRC 14874 / CCUG 350202 / NBRC 14942 / NCIMB 11054 / UW101) (Cytophaga johnsonae).